Here is a 315-residue protein sequence, read N- to C-terminus: Melanocyte-stimulating hormone receptor (315 aa).

Over 1 to 35 the chain is Extracellular; that stretch reads MSTQEPQKSLLGSLNSNATSHLGLATNQSEPWCLY. Residues Asn17 and Asn27 are each glycosylated (N-linked (GlcNAc...) asparagine). The chain crosses the membrane as a helical span at residues 36–61; the sequence is VSIPDGLFLSLGLVSLVENVLVVIAI. The Cytoplasmic segment spans residues 62-70; it reads TKNRNLHSP. The chain crosses the membrane as a helical span at residues 71–91; it reads MYYFICCLALSDLMVSVSIVL. The Extracellular segment spans residues 92 to 116; sequence ETTIILLLEAGILVARVALVQQLDN. A helical transmembrane segment spans residues 117–138; the sequence is LIDVLICGSMVSSLCFLGIIAI. The Cytoplasmic portion of the chain corresponds to 139–161; sequence DRYISIFYALRYHSIVTLPRARR. The chain crosses the membrane as a helical span at residues 162 to 181; it reads AVVGIWMVSIVSSTLFITYY. Residues 182–189 lie on the Extracellular side of the membrane; the sequence is KHTAVLLC. A helical membrane pass occupies residues 190-209; it reads LVTFFLAMLALMAILYAHMF. Residues 210 to 238 are Cytoplasmic-facing; that stretch reads TRACQHAQGIAQLHKRRRSIRQGFCLKGA. The chain crosses the membrane as a helical span at residues 239-264; that stretch reads ATLTILLGIFFLCWGPFFLHLLLIVL. Over 265–277 the chain is Extracellular; that stretch reads CPQHPTCSCIFKN. Residues 278 to 298 traverse the membrane as a helical segment; that stretch reads FNLFLLLIVLSSTVDPLIYAF. The Cytoplasmic segment spans residues 299-315; sequence RSQELRMTLKEVLLCSW. Residue Cys313 is the site of S-palmitoyl cysteine attachment.

This sequence belongs to the G-protein coupled receptor 1 family. In terms of assembly, interacts with MGRN1, but does not undergo MGRN1-mediated ubiquitination; this interaction competes with GNAS-binding and thus inhibits agonist-induced cAMP production. Interacts with OPN3; the interaction results in a decrease in MC1R-mediated cAMP signaling and ultimately a decrease in melanin production in melanocytes.

It is found in the cell membrane. Functionally, receptor for MSH (alpha, beta and gamma) and ACTH. The activity of this receptor is mediated by G proteins which activate adenylate cyclase. Mediates melanogenesis, the production of eumelanin (black/brown) and phaeomelanin (red/yellow), via regulation of cAMP signaling in melanocytes. The protein is Melanocyte-stimulating hormone receptor (Mc1r) of Mus musculus (Mouse).